Consider the following 148-residue polypeptide: Extracellular globin-2B (148 aa).

Residues 3-148 (CCSAADRHEV…IADVIKAELP (146 aa)) enclose the Globin domain. Cysteines 4 and 135 form a disulfide. Heme b is bound at residue histidine 98.

The protein belongs to the globin family. In terms of assembly, disulfide bonded trimer of chains IIA, IIB, and IIC.

The protein resides in the secreted. This chain is Extracellular globin-2B, found in Tylorrhynchus heterochetus (Japanese palolo worm).